The primary structure comprises 280 residues: Cell division protein SepF (280 aa).

Positions 22-117 (DYVDDRAPRA…DDYPEDAYGE (96 aa)) are disordered. Composition is skewed to basic and acidic residues over residues 25 to 36 (DDRAPRASERGG) and 53 to 83 (RYGEDRYSADRFGPERFGAERFGPDRFGADR).

It belongs to the SepF family. Homodimer. Interacts with FtsZ.

The protein localises to the cytoplasm. In terms of biological role, cell division protein that is part of the divisome complex and is recruited early to the Z-ring. Probably stimulates Z-ring formation, perhaps through the cross-linking of FtsZ protofilaments. Its function overlaps with FtsA. In Nocardia farcinica (strain IFM 10152), this protein is Cell division protein SepF.